Here is a 138-residue protein sequence, read N- to C-terminus: Large ribosomal subunit protein uL16 (138 aa).

A disordered region spans residues 1–22 (MQQPARTKYRKQQKGRNKGIAT). The segment covering 7-17 (TKYRKQQKGRN) has biased composition (basic residues).

The protein belongs to the universal ribosomal protein uL16 family. In terms of assembly, part of the 50S ribosomal subunit.

Binds 23S rRNA and is also seen to make contacts with the A and possibly P site tRNAs. The sequence is that of Large ribosomal subunit protein uL16 from Nitrosospira multiformis (strain ATCC 25196 / NCIMB 11849 / C 71).